We begin with the raw amino-acid sequence, 162 residues long: NADH-quinone oxidoreductase subunit I 2 (162 aa).

4Fe-4S ferredoxin-type domains lie at 53 to 83 (LRRY…IDSE) and 93 to 122 (TRYD…ETRI). 8 residues coordinate [4Fe-4S] cluster: Cys63, Cys66, Cys69, Cys73, Cys102, Cys105, Cys108, and Cys112.

This sequence belongs to the complex I 23 kDa subunit family. As to quaternary structure, NDH-1 is composed of 14 different subunits. Subunits NuoA, H, J, K, L, M, N constitute the membrane sector of the complex. [4Fe-4S] cluster is required as a cofactor.

Its subcellular location is the cell inner membrane. The catalysed reaction is a quinone + NADH + 5 H(+)(in) = a quinol + NAD(+) + 4 H(+)(out). Functionally, NDH-1 shuttles electrons from NADH, via FMN and iron-sulfur (Fe-S) centers, to quinones in the respiratory chain. The immediate electron acceptor for the enzyme in this species is believed to be ubiquinone. Couples the redox reaction to proton translocation (for every two electrons transferred, four hydrogen ions are translocated across the cytoplasmic membrane), and thus conserves the redox energy in a proton gradient. In Nitrosococcus oceani (strain ATCC 19707 / BCRC 17464 / JCM 30415 / NCIMB 11848 / C-107), this protein is NADH-quinone oxidoreductase subunit I 2.